The sequence spans 214 residues: Ribonuclease HII (214 aa).

Residues 26 to 214 (EIVCGVDEAG…PVRAALDLIR (189 aa)) form the RNase H type-2 domain. D32, E33, and D124 together coordinate a divalent metal cation.

This sequence belongs to the RNase HII family. It depends on Mn(2+) as a cofactor. Requires Mg(2+) as cofactor.

The protein resides in the cytoplasm. It carries out the reaction Endonucleolytic cleavage to 5'-phosphomonoester.. Endonuclease that specifically degrades the RNA of RNA-DNA hybrids. The chain is Ribonuclease HII from Burkholderia lata (strain ATCC 17760 / DSM 23089 / LMG 22485 / NCIMB 9086 / R18194 / 383).